The primary structure comprises 133 residues: Lymphocyte antigen 6 complex locus protein G6d (133 aa).

The N-terminal stretch at Met1–Gly19 is a signal peptide. Residues Met22–Leu116 form the UPAR/Ly6 domain. Cys27 and Cys35 are oxidised to a cystine. Thr40 and Thr41 each carry an O-linked (GalNAc...) threonine glycan. 2 disulfide bridges follow: Cys42–Cys71 and Cys77–Cys96. Residue Ser104 is the site of GPI-anchor amidated serine attachment. Positions Ala105–Gly133 are cleaved as a propeptide — removed in mature form.

Homodimer. O-glycosylated. As to expression, expressed in the adult lung, and in fetal liver, lung, kidney, brain and spleen.

The protein resides in the cell membrane. Its subcellular location is the cell projection. It is found in the filopodium. In Homo sapiens (Human), this protein is Lymphocyte antigen 6 complex locus protein G6d (LY6G6D).